A 233-amino-acid polypeptide reads, in one-letter code: Putative peroxiredoxin (233 aa).

The region spanning 41–200 (AQIGKEAPEF…TIRIVKAIQF (160 aa)) is the Thioredoxin domain. Residue C87 is the Cysteine sulfenic acid (-SOH) intermediate of the active site.

It belongs to the peroxiredoxin family. AhpC/Prx1 subfamily. As to quaternary structure, homodimer; disulfide-linked, upon oxidation.

The protein resides in the cell membrane. The catalysed reaction is a hydroperoxide + [thioredoxin]-dithiol = an alcohol + [thioredoxin]-disulfide + H2O. Its function is as follows. Thiol-specific peroxidase that catalyzes the reduction of hydrogen peroxide and organic hydroperoxides to water and alcohols, respectively. Plays a role in cell protection against oxidative stress by detoxifying peroxides and as sensor of hydrogen peroxide-mediated signaling events. This Entamoeba histolytica (strain ATCC 30459 / HM-1:IMSS / ABRM) protein is Putative peroxiredoxin.